The chain runs to 135 residues: Dihydromethanopterin reductase (135 aa).

Residues alanine 9, 16 to 21 (LGLNGH), 52 to 54 (PKT), and 93 to 97 (GGIAV) contribute to the NADP(+) site.

Homodimer.

The catalysed reaction is 5,6,7,8-tetrahydromethanopterin + NAD(+) = 7,8-dihydromethanopterin + NADH + H(+). It catalyses the reaction 5,6,7,8-tetrahydromethanopterin + NADP(+) = 7,8-dihydromethanopterin + NADPH + H(+). The protein operates within cofactor biosynthesis; 5,6,7,8-tetrahydromethanopterin biosynthesis. Catalyzes the reduction of dihydromethanopterin (H(2)MPT) to tetrahydromethanopterin (H(4)MPT). Shows preference for NADPH rather than NADH as electron donor. Does not reduce dihydrofolate. The sequence is that of Dihydromethanopterin reductase (dmrA) from Methylorubrum extorquens (strain ATCC 14718 / DSM 1338 / JCM 2805 / NCIMB 9133 / AM1) (Methylobacterium extorquens).